An 817-amino-acid polypeptide reads, in one-letter code: Protein hunchback (817 aa).

Disordered regions lie at residues 51–77 (PGTI…HSPL), 93–132 (HNGG…TSSA), and 187–252 (YSQQ…EDQD). Residues 62–76 (QQHSSMMASQPQHSP) are compositionally biased toward low complexity. Residues 103-119 (FSDNSGAMTPSPNTNVG) show a composition bias toward polar residues. The segment covering 189–201 (QQQQQQQQRQLQQ) has biased composition (low complexity). 4 C2H2-type zinc fingers span residues 287–309 (HKCK…ARTH), 316–338 (LQCP…IRKH), 344–366 (FQCD…RKSH), and 372–396 (YRCA…KYEH). 4 disordered regions span residues 456-477 (PLQQ…SSVA), 491-513 (QNLA…SSQQ), 564-619 (QLQQ…QQTP), and 666-758 (APTS…AGNS). The segment covering 564–576 (QLQQQQQNKQANE) has biased composition (low complexity). A compositionally biased stretch (acidic residues) spans 577–595 (NGEEDEEDNDEVDEDEEEF). Polar residues predominate over residues 680-694 (MPPTTSSPIHPSQVN). Residues 721-758 (PTTANTSASSTASSSGNSSNSSSTSTSSNSNSSSAGNS) show a composition bias toward low complexity. C2H2-type zinc fingers lie at residues 764–786 (YECK…MGYH) and 792–816 (FKCN…RNAH).

It belongs to the hunchback C2H2-type zinc-finger protein family.

The protein resides in the nucleus. Functionally, gap class segmentation protein that controls development of head structures. The sequence is that of Protein hunchback (hb) from Musca domestica (House fly).